The following is a 462-amino-acid chain: Elongation factor 1-alpha 1 (462 aa).

The residue at position 2 (Gly-2) is a N,N,N-trimethylglycine. The 238-residue stretch at 5-242 (KTHINIVVIG…DCILPPTRPT (238 aa)) folds into the tr-type G domain. Positions 14–21 (GHVDSGKS) are G1. Residue 14–21 (GHVDSGKS) coordinates GTP. The interval 70–74 (GITID) is G2. A G3 region spans residues 91–94 (DAPG). Residues 153-156 (NKMD) and 194-196 (SGW) each bind GTP. The interval 153–156 (NKMD) is G4. Positions 194–196 (SGW) are G5. Glu-301 and Glu-374 each carry 5-glutamyl glycerylphosphorylethanolamine.

The protein belongs to the TRAFAC class translation factor GTPase superfamily. Classic translation factor GTPase family. EF-Tu/EF-1A subfamily.

It is found in the cytoplasm. It carries out the reaction GTP + H2O = GDP + phosphate + H(+). Its function is as follows. Translation elongation factor that catalyzes the GTP-dependent binding of aminoacyl-tRNA (aa-tRNA) to the A-site of ribosomes during the elongation phase of protein synthesis. Base pairing between the mRNA codon and the aa-tRNA anticodon promotes GTP hydrolysis, releasing the aa-tRNA from EEF1A1 and allowing its accommodation into the ribosome. The growing protein chain is subsequently transferred from the P-site peptidyl tRNA to the A-site aa-tRNA, extending it by one amino acid through ribosome-catalyzed peptide bond formation. This Gallus gallus (Chicken) protein is Elongation factor 1-alpha 1 (EEF1A).